A 270-amino-acid polypeptide reads, in one-letter code: Putative carbamate hydrolase RutD (270 aa).

This sequence belongs to the AB hydrolase superfamily. Hydrolase RutD family.

It catalyses the reaction carbamate + 2 H(+) = NH4(+) + CO2. Involved in pyrimidine catabolism. May facilitate the hydrolysis of carbamate, a reaction that can also occur spontaneously. The chain is Putative carbamate hydrolase RutD from Escherichia coli O44:H18 (strain 042 / EAEC).